Reading from the N-terminus, the 175-residue chain is CASP-like protein 2C1 (175 aa).

Residues 1-7 lie on the Cytoplasmic side of the membrane; sequence MVRLRET. A helical transmembrane segment spans residues 8–28; that stretch reads EVILRLCIVFFILLSSCLIGL. At 29–51 the chain is on the extracellular side; that stretch reads DSQTKEIAYIHKKVSFRYLLALE. A helical transmembrane segment spans residues 52–72; the sequence is AELYINVVVAAYNLVQIGLGW. The Cytoplasmic segment spans residues 73-91; that stretch reads YNVEQKTSNPKWFSYLLDQ. The helical transmembrane segment at 92 to 112 threads the bilayer; sequence TAAYVVFAGTSAAAQHSLLVV. The Extracellular portion of the chain corresponds to 113-136; the sequence is TGSRELQWMKWCYKFTRFCFQMGS. Residues 137 to 157 traverse the membrane as a helical segment; sequence AIILNYIAAALMVLLSSISAF. The Cytoplasmic segment spans residues 158 to 175; that stretch reads NLFRLYSPKRFFSFKSSS.

The protein belongs to the Casparian strip membrane proteins (CASP) family. Homodimer and heterodimers.

It localises to the cell membrane. The protein is CASP-like protein 2C1 of Arabidopsis lyrata subsp. lyrata (Lyre-leaved rock-cress).